The following is a 332-amino-acid chain: DGAT1/2-independent enzyme synthesizing storage lipids (332 aa).

Residues 1–10 (MIGSNESSTE) are Lumenal-facing. N-linked (GlcNAc...) asparagine glycosylation occurs at N5. A helical transmembrane segment spans residues 11 to 31 (GPIPTSYLSFLAYLLGEWTGV). Topologically, residues 32–45 (EHTEDYLSYGAYLS) are cytoplasmic. A helical membrane pass occupies residues 46-66 (WVLFPLAIVFILPVAIFFFCF). The Lumenal portion of the chain corresponds to 67 to 332 (NTSLLLLHIY…ERFQTRQKED (266 aa)). H132 is an active-site residue. N289 carries N-linked (GlcNAc...) asparagine glycosylation.

The protein belongs to the diacylglycerol acyltransferase family. Highly divergent.

The protein localises to the endoplasmic reticulum membrane. The enzyme catalyses a 1,2-diacylglycerol + a 1,2-diacyl-sn-glycero-3-phosphocholine = a triacylglycerol + a 1-acyl-sn-glycero-3-phosphocholine. It carries out the reaction a 1-O-alkyl-2-acyl-sn-glycero-3-phosphocholine + a 1,2-diacylglycerol = a 1-O-alkyl-sn-glycero-3-phosphocholine + a triacylglycerol. The catalysed reaction is a 2-acylglycerol + an acyl-CoA = a 1,2-diacylglycerol + CoA. It catalyses the reaction an acyl-CoA + a 1,2-diacyl-sn-glycerol = a triacyl-sn-glycerol + CoA. The enzyme catalyses 2-(9Z-octadecenoyl)-glycerol + (9Z)-octadecenoyl-CoA = 1,2-di-(9Z-octadecenoyl)-glycerol + CoA. It carries out the reaction 1,2-di-(9Z-octadecenoyl)-sn-glycerol + (9Z)-octadecenoyl-CoA = 1,2,3-tri-(9Z-octadecenoyl)-glycerol + CoA. In terms of biological role, catalytic subunit of the alternative triglyceride biosynthesis pathway, which mediates formation of triacylglycerol from diacylglycerol and membrane phospholipids. Synthesizes triacylglycerol at the expense of membrane phospholipids, such as phosphatidylcholine (PC) and its ether-linked form (ePC), thereby altering the composition of membranes. The alternative triglyceride biosynthesis pathway is probably required to provide the energy required for rapid growth when fuel sources are limiting. It maintains mitochondrial function during periods of extracellular lipid starvation. Can also use acyl-CoA as donor: acts as a acyl-CoA:monoacylglycerol acyltransferase (MGAT), but also shows acyl-CoA:diacylglycerol acyltransferase (DGAT) activity. The chain is DGAT1/2-independent enzyme synthesizing storage lipids (TMEM68) from Gallus gallus (Chicken).